Consider the following 106-residue polypeptide: Large ribosomal subunit protein uL24 (106 aa).

The segment covering 84-97 (EKIGRELGAKEKAR) has biased composition (basic and acidic residues). The tract at residues 84–106 (EKIGRELGAKEKARLQKRKTAAK) is disordered.

Belongs to the universal ribosomal protein uL24 family. As to quaternary structure, part of the 50S ribosomal subunit.

Functionally, one of two assembly initiator proteins, it binds directly to the 5'-end of the 23S rRNA, where it nucleates assembly of the 50S subunit. Its function is as follows. One of the proteins that surrounds the polypeptide exit tunnel on the outside of the subunit. This Anaeromyxobacter dehalogenans (strain 2CP-1 / ATCC BAA-258) protein is Large ribosomal subunit protein uL24.